The sequence spans 403 residues: Double C2-like domain-containing protein alpha (403 aa).

Residues 1-92 (MRGRRGDRMT…DSYDSDDTTA (92 aa)) are interaction with UNC13D and DYNLT1. 2 consecutive C2 domains span residues 92-214 (ALGT…HFNI) and 254-387 (ERGR…ERWH). Residues Asp-123, Asp-129, Asp-184, Asp-186, Asp-285, Asp-291, Asp-345, Asp-347, and Asp-353 each coordinate Ca(2+). The segment at 218 to 403 (RQVPLPSPSS…PPAAGALPLA (186 aa)) is interaction with UNC13D.

As to quaternary structure, interacts (via N-terminus) with UNC13A. Interacts with cytoplasmic dynein light chain DYNLT1. Interacts with UNC13D. The cofactor is Ca(2+). As to expression, predominantly expressed in brain. Also found in non-neural tissues. Expressed in RBL-2H3 mast cell line.

It localises to the cytoplasmic vesicle. Its subcellular location is the secretory vesicle. The protein localises to the synaptic vesicle membrane. The protein resides in the synapse. It is found in the synaptosome. It localises to the lysosome. Calcium sensor which most probably regulates fusion of vesicles with membranes. Binds calcium and phospholipids. May be involved in calcium dependent neurotransmitter release through the interaction with UNC13A. May be involved in calcium-dependent spontaneous release of neurotransmitter in absence of action potentials in neuronal cells. Regulates Ca(2+)-dependent secretory lysosome exocytosis in mast cells. In Rattus norvegicus (Rat), this protein is Double C2-like domain-containing protein alpha (Doc2a).